A 144-amino-acid chain; its full sequence is Large ribosomal subunit protein uL24 (144 aa).

Positions 102–144 (NIVVEKPEPEPEPRKEETAEAQEAKEEAVAEEKTEVDDNDKQN) are disordered. Over residues 103–134 (IVVEKPEPEPEPRKEETAEAQEAKEEAVAEEK) the composition is skewed to basic and acidic residues. Residues 135 to 144 (TEVDDNDKQN) show a composition bias toward acidic residues.

Belongs to the universal ribosomal protein uL24 family. In terms of assembly, part of the 50S ribosomal subunit.

In terms of biological role, one of two assembly initiator proteins, it binds directly to the 5'-end of the 23S rRNA, where it nucleates assembly of the 50S subunit. Its function is as follows. Located at the polypeptide exit tunnel on the outside of the subunit. The sequence is that of Large ribosomal subunit protein uL24 (rpl24) from Thermoplasma acidophilum (strain ATCC 25905 / DSM 1728 / JCM 9062 / NBRC 15155 / AMRC-C165).